The following is a 382-amino-acid chain: Gap junction alpha-1 protein (382 aa).

Topologically, residues 2-23 are cytoplasmic; the sequence is GDWSALGKLLDKVQAYSTAGGK. Ser5 is subject to Phosphoserine. The chain crosses the membrane as a helical span at residues 24–44; that stretch reads VWLSVLFIFRILLLGTAVESA. The Extracellular portion of the chain corresponds to 45–76; sequence WGDEQSAFRCNTQQPGCENVCYDKSFPISHVR. Cystine bridges form between Cys54-Cys192 and Cys187-Cys198. The helical transmembrane segment at 77–97 threads the bilayer; that stretch reads FWVLQIIFVSVPTLLYLAHVF. At 98 to 155 the chain is on the cytoplasmic side; that stretch reads YVMRKEEKLNKKEEELKVAQTDGVNVDMHLKQIEIKKFKYGIEEHGKVKMRGGLLRTY. Lys144 participates in a covalent cross-link: Glycyl lysine isopeptide (Lys-Gly) (interchain with G-Cter in SUMO). The chain crosses the membrane as a helical span at residues 156–176; sequence IISILFKSIFEVAFLLIQWYI. The Extracellular segment spans residues 177 to 207; that stretch reads YGFSLSAVYTCKRDPCPHQVDCFLSRPTEKT. A helical membrane pass occupies residues 208 to 228; it reads IFIIFMLVVSLVSLALNIIEL. Residues 229-382 are Cytoplasmic-facing; the sequence is FYVFFKGVKD…SRPRPDDLEI (154 aa). Lys237 participates in a covalent cross-link: Glycyl lysine isopeptide (Lys-Gly) (interchain with G-Cter in SUMO). The tract at residues 244-382 is interaction with NOV; the sequence is SDPYHATSGA…SRPRPDDLEI (139 aa). At Tyr247 the chain carries Phosphotyrosine. Phosphoserine occurs at positions 255 and 262. Residues 264–382 are interaction with UBQLN4; sequence KYAYFNGCSS…SRPRPDDLEI (119 aa). S-nitrosocysteine is present on Cys271. A Phosphothreonine modification is found at Thr275. Residues Ser306 and Ser314 each carry the phosphoserine modification. A compositionally biased stretch (polar residues) spans 317–332; sequence QNRMGQAGSTISNSHA. The tract at residues 317 to 382 is disordered; sequence QNRMGQAGST…SRPRPDDLEI (66 aa). A Phosphoserine; by CK1 modification is found at Ser325. Thr326 carries the phosphothreonine modification. Phosphoserine; by CK1 is present on residues Ser328 and Ser330. Residues Ser344 and Ser365 each carry the phosphoserine modification. Positions 362–374 are enriched in low complexity; sequence RPSSRASSRASSR. Residue Ser368 is modified to Phosphoserine; by PKC/PRKCG and PKC/PRKCD. Phosphoserine occurs at positions 369 and 373.

The protein belongs to the connexin family. Alpha-type (group II) subfamily. In terms of assembly, a connexon is composed of a hexamer of connexins. Interacts (via C-terminus) with TJP1. Interacts (via C-terminus) with SRC (via SH3 domain). Interacts (not ubiquitinated) with UBQLN4 (via UBA domain). Interacts with SGSM3 and CNST. Interacts with RIC1/CIP150. Interacts with CSNK1D. Interacts with NOV. Interacts with TMEM65. Interacts with ANK3/ANKG and PKP2. Phosphorylated at Ser-368 by PRKCG; phosphorylation induces disassembly of gap junction plaques and inhibition of gap junction activity. Phosphorylation at Ser-325, Ser-328 and Ser-330 by CK1 modulates gap junction assembly. Phosphorylation at Ser-368 by PRKCD triggers its internalization into small vesicles leading to proteasome-mediated degradation. Post-translationally, sumoylated with SUMO1, SUMO2 and SUMO3, which may regulate the level of functional Cx43 gap junctions at the plasma membrane. May be desumoylated by SENP1 or SENP2. In terms of processing, S-nitrosylation at Cys-271 is enriched at the muscle endothelial gap junction in arteries, it augments channel permeability and may regulate of smooth muscle cell to endothelial cell communication. Acetylated in the developing cortex; leading to delocalization from the cell membrane. As to expression, expressed at intercalated disks in the heart (at protein level). Expressed in the fetal cochlea.

It is found in the cell membrane. The protein localises to the cell junction. It localises to the gap junction. Its subcellular location is the endoplasmic reticulum. Functionally, gap junction protein that acts as a regulator of bladder capacity. A gap junction consists of a cluster of closely packed pairs of transmembrane channels, the connexons, through which materials of low MW diffuse from one cell to a neighboring cell. May play a critical role in the physiology of hearing by participating in the recycling of potassium to the cochlear endolymph. Negative regulator of bladder functional capacity: acts by enhancing intercellular electrical and chemical transmission, thus sensitizing bladder muscles to cholinergic neural stimuli and causing them to contract. May play a role in cell growth inhibition through the regulation of NOV expression and localization. Plays an essential role in gap junction communication in the ventricles. The chain is Gap junction alpha-1 protein (GJA1) from Homo sapiens (Human).